The primary structure comprises 185 residues: Peptidyl-tRNA hydrolase (185 aa).

Position 14 (Tyr-14) interacts with tRNA. The active-site Proton acceptor is His-19. TRNA contacts are provided by Phe-64, Asn-66, and Asn-112.

Belongs to the PTH family. Monomer.

Its subcellular location is the cytoplasm. It catalyses the reaction an N-acyl-L-alpha-aminoacyl-tRNA + H2O = an N-acyl-L-amino acid + a tRNA + H(+). In terms of biological role, hydrolyzes ribosome-free peptidyl-tRNAs (with 1 or more amino acids incorporated), which drop off the ribosome during protein synthesis, or as a result of ribosome stalling. Catalyzes the release of premature peptidyl moieties from peptidyl-tRNA molecules trapped in stalled 50S ribosomal subunits, and thus maintains levels of free tRNAs and 50S ribosomes. In Lacticaseibacillus casei (strain BL23) (Lactobacillus casei), this protein is Peptidyl-tRNA hydrolase.